We begin with the raw amino-acid sequence, 482 residues long: Rho GTPase-activating protein 15 (482 aa).

Residues S51, S111, S205, S208, and S250 each carry the phosphoserine modification. Residues 87–198 enclose the PH domain; sequence MVEKEGYLQK…WFHAIKNAID (112 aa). In terms of domain architecture, Rho-GAP spans 288–477; the sequence is SHLHTVCERE…FMLTEYDKIF (190 aa).

The protein localises to the cytoplasm. It is found in the membrane. GTPase activator for the Rho-type GTPases by converting them to an inactive GDP-bound state. Has activity toward RAC1. Overexpression results in an increase in actin stress fibers and cell contraction. This chain is Rho GTPase-activating protein 15 (Arhgap15), found in Rattus norvegicus (Rat).